The primary structure comprises 172 residues: Large ribosomal subunit protein bL21m (172 aa).

The transit peptide at 1–20 (MIRNIGSNLMKSSSSILLRN) directs the protein to the mitochondrion.

Belongs to the bacterial ribosomal protein bL21 family.

The protein localises to the mitochondrion. This Dictyostelium discoideum (Social amoeba) protein is Large ribosomal subunit protein bL21m (mrpl21).